A 287-amino-acid polypeptide reads, in one-letter code: Isopentenyl-diphosphate Delta-isomerase 1, chloroplastic (287 aa).

The N-terminal 51 residues, 1–51, are a transit peptide targeting the chloroplast; the sequence is MTLLLNTTAKLYIAPRTLPFTSSSTFARSPFLRIPSLLKPLSPLTARVSLS. Position 90 (Lys-90) interacts with substrate. Residues His-94 and His-106 each coordinate Mg(2+). A Nudix hydrolase domain is found at 104 to 256; sequence LLHRAFSVFL…GLKLSPWFRL (153 aa). Residues Arg-125 and Lys-129 each coordinate substrate. Residue Cys-141 is part of the active site. Residue Ser-142 participates in substrate binding. The short motif at 142-172 is the Nudix box element; the sequence is SHPLYRESELIDEESLGARNAAQRKLLDELG. Residues Glu-201 and Glu-203 each coordinate Mg(2+). The active site involves Glu-203.

The protein belongs to the IPP isomerase type 1 family. In terms of assembly, monomer. The cofactor is Mg(2+). Mainly expressed in roots and trichomes and, to a lower extent, in leaves, flowers and stems.

The protein resides in the plastid. It is found in the chloroplast. It carries out the reaction isopentenyl diphosphate = dimethylallyl diphosphate. The protein operates within isoprenoid biosynthesis; dimethylallyl diphosphate biosynthesis; dimethylallyl diphosphate from isopentenyl diphosphate: step 1/1. It participates in porphyrin-containing compound metabolism; chlorophyll biosynthesis. In terms of biological role, catalyzes the 1,3-allylic rearrangement of the homoallylic substrate isopentenyl (IPP) to its highly electrophilic allylic isomer, dimethylallyl diphosphate (DMAPP). The chain is Isopentenyl-diphosphate Delta-isomerase 1, chloroplastic from Cannabis sativa (Hemp).